A 494-amino-acid polypeptide reads, in one-letter code: Alpha-amylase 1 (494 aa).

Residues 1 to 18 (MFLAKSIVCLALLAVANA) form the signal peptide. A disulfide bridge links cysteine 46 with cysteine 102. The Ca(2+) site is built by asparagine 116, arginine 165, and aspartate 174. Cysteine 153 and cysteine 167 are joined by a disulfide. Arginine 202 is a binding site for chloride. Aspartate 204 functions as the Nucleophile in the catalytic mechanism. Histidine 208 serves as a coordination point for Ca(2+). Glutamate 241 serves as the catalytic Proton donor. The chloride site is built by asparagine 304 and arginine 343. The segment at 350 to 370 (FTDTDQGPPTTDGQNIASPSF) is disordered. Residues 351 to 363 (TDTDQGPPTTDGQ) are compositionally biased toward low complexity. Cystine bridges form between cysteine 376–cysteine 382 and cysteine 448–cysteine 460.

Belongs to the glycosyl hydrolase 13 family. As to quaternary structure, monomer. It depends on Ca(2+) as a cofactor. The cofactor is chloride.

The catalysed reaction is Endohydrolysis of (1-&gt;4)-alpha-D-glucosidic linkages in polysaccharides containing three or more (1-&gt;4)-alpha-linked D-glucose units.. The protein is Alpha-amylase 1 (Amy35) of Drosophila ananassae (Fruit fly).